Consider the following 182-residue polypeptide: NADH-quinone oxidoreductase subunit B (182 aa).

Residues cysteine 47, cysteine 48, cysteine 113, and cysteine 142 each contribute to the [4Fe-4S] cluster site.

This sequence belongs to the complex I 20 kDa subunit family. As to quaternary structure, NDH-1 is composed of 14 different subunits. Subunits NuoB, C, D, E, F, and G constitute the peripheral sector of the complex. [4Fe-4S] cluster serves as cofactor.

The protein resides in the cell inner membrane. The catalysed reaction is a quinone + NADH + 5 H(+)(in) = a quinol + NAD(+) + 4 H(+)(out). Functionally, NDH-1 shuttles electrons from NADH, via FMN and iron-sulfur (Fe-S) centers, to quinones in the respiratory chain. The immediate electron acceptor for the enzyme in this species is believed to be ubiquinone. Couples the redox reaction to proton translocation (for every two electrons transferred, four hydrogen ions are translocated across the cytoplasmic membrane), and thus conserves the redox energy in a proton gradient. This Anaeromyxobacter dehalogenans (strain 2CP-1 / ATCC BAA-258) protein is NADH-quinone oxidoreductase subunit B.